The sequence spans 436 residues: Serine/threonine-protein kinase STK11 (436 aa).

Position 31 is a phosphoserine (serine 31). Residues lysine 44 and lysine 48 each carry the N6-acetyllysine modification. The tract at residues 45-90 (LIGKYLMGDLLGEGSYGKVKEVLDSETLCRRAVKILKKKKLRRIPN) is sufficient for interaction with SIRT1. The region spanning 49-309 (YLMGDLLGEG…IRQIRQHSWF (261 aa)) is the Protein kinase domain. Residues 55–63 (LGEGSYGKV) and lysine 78 contribute to the ATP site. N6-acetyllysine occurs at positions 96 and 97. Residue aspartate 176 is the Proton acceptor of the active site. Threonine 189 bears the Phosphothreonine; by autocatalysis mark. N6-acetyllysine occurs at positions 296 and 311. The residue at position 325 (serine 325) is a Phosphoserine. Position 336 is a phosphothreonine; by autocatalysis (threonine 336). Phosphothreonine; by ATM and autocatalysis is present on threonine 366. The interval 398–421 (TEPQLSSKVKPEGRPGTANPARKV) is disordered. At serine 403 the chain carries Phosphoserine. Position 420 is an N6-acetyllysine (lysine 420). The S-palmitoyl cysteine moiety is linked to residue cysteine 422. Lysine 426 is modified (N6-acetyllysine). Position 431 is a phosphoserine; by autocatalysis, PKA, PKC/PRKCZ and RPS6KA1 (serine 431). At cysteine 433 the chain carries Cysteine methyl ester. Cysteine 433 is lipidated: S-farnesyl cysteine. Lysine 434 carries the N6-acetyllysine modification. Residues 434-436 (KQQ) constitute a propeptide, removed in mature form.

It belongs to the protein kinase superfamily. CAMK Ser/Thr protein kinase family. LKB1 subfamily. In terms of assembly, catalytic component of a trimeric complex composed of STK11/LKB1, STRAD (STRADA or STRADB) and CAB39/MO25 (CAB39/MO25alpha or CAB39L/MO25beta): the complex tethers STK11/LKB1 in the cytoplasm and stimulates its catalytic activity. Found in a ternary complex composed of SMAD4, STK11/LKB1 and STK11IP. Interacts with p53/TP53, SMAD4, STK11IP and WDR6. Interacts with NR4A1. Interacts with NISCH; this interaction may increase STK11 activity. Interacts with PTEN, leading to PTEN phosphorylation. Interacts with SIRT1; the interaction deacetylates STK11. Interacts with CDKN1A. Requires Mg(2+) as cofactor. Mn(2+) serves as cofactor. Phosphorylated by ATM at Thr-366 following ionizing radiation (IR). Phosphorylation at Ser-431 by RPS6KA1 and/or some PKA is required to inhibit cell growth. Phosphorylation at Ser-431 is also required during neuronal polarization to mediate phosphorylation of BRSK1 and BRSK2. Phosphorylation by PKC/PRKCZ at Ser-399 in isoform 2 promotes metformin (or peroxynitrite)-induced nuclear export of STK11 and activation of AMPK. UV radiation-induced phosphorylation at Thr-366 mediates CDKN1A degradation. In terms of processing, acetylated. Deacetylation at Lys-48 enhances cytoplasmic localization and kinase activity in vitro. As to expression, widely expressed. Predominantly expressed in testis (at protein level). In terms of tissue distribution, expressed in adult brain and liver and absent from tissues derived from postnatal day 7.

It localises to the nucleus. Its subcellular location is the cytoplasm. It is found in the membrane. The protein localises to the mitochondrion. It catalyses the reaction L-seryl-[protein] + ATP = O-phospho-L-seryl-[protein] + ADP + H(+). It carries out the reaction L-threonyl-[protein] + ATP = O-phospho-L-threonyl-[protein] + ADP + H(+). With respect to regulation, activated by forming a complex with STRAD (STRADA or STRADB) and CAB39/MO25 (CAB39/MO25alpha or CAB39L/MO25beta): STRADA (or STRADB)-binding promotes a conformational change of STK11/LKB1 in an active conformation, which is stabilized by CAB39/MO25alpha (or CAB39L/MO25beta) interacting with the STK11/LKB1 activation loop. Sequestration in the nucleus by NR4A1 prevents it from phosphorylating and activating cytoplasmic AMPK. Functionally, tumor suppressor serine/threonine-protein kinase that controls the activity of AMP-activated protein kinase (AMPK) family members, thereby playing a role in various processes such as cell metabolism, cell polarity, apoptosis and DNA damage response. Acts by phosphorylating the T-loop of AMPK family proteins, thus promoting their activity: phosphorylates PRKAA1, PRKAA2, BRSK1, BRSK2, MARK1, MARK2, MARK3, MARK4, NUAK1, NUAK2, SIK1, SIK2, SIK3 and SNRK but not MELK. Also phosphorylates non-AMPK family proteins such as STRADA, PTEN and possibly p53/TP53. Acts as a key upstream regulator of AMPK by mediating phosphorylation and activation of AMPK catalytic subunits PRKAA1 and PRKAA2 and thereby regulates processes including: inhibition of signaling pathways that promote cell growth and proliferation when energy levels are low, glucose homeostasis in liver, activation of autophagy when cells undergo nutrient deprivation, and B-cell differentiation in the germinal center in response to DNA damage. Also acts as a regulator of cellular polarity by remodeling the actin cytoskeleton. Required for cortical neuron polarization by mediating phosphorylation and activation of BRSK1 and BRSK2, leading to axon initiation and specification. Involved in DNA damage response: interacts with p53/TP53 and recruited to the CDKN1A/WAF1 promoter to participate in transcription activation. Able to phosphorylate p53/TP53; the relevance of such result in vivo is however unclear and phosphorylation may be indirect and mediated by downstream STK11/LKB1 kinase NUAK1. Also acts as a mediator of p53/TP53-dependent apoptosis via interaction with p53/TP53: translocates to the mitochondrion during apoptosis and regulates p53/TP53-dependent apoptosis pathways. Regulates UV radiation-induced DNA damage response mediated by CDKN1A. In association with NUAK1, phosphorylates CDKN1A in response to UV radiation and contributes to its degradation which is necessary for optimal DNA repair. Has a role in spermiogenesis. The polypeptide is Serine/threonine-protein kinase STK11 (Mus musculus (Mouse)).